Consider the following 257-residue polypeptide: Ribosome-recycling factor, mitochondrial (257 aa).

The protein belongs to the RRF family.

It localises to the mitochondrion. In terms of biological role, necessary for protein synthesis in mitochondria. Functions as a ribosome recycling factor in mitochondria. This Debaryomyces hansenii (strain ATCC 36239 / CBS 767 / BCRC 21394 / JCM 1990 / NBRC 0083 / IGC 2968) (Yeast) protein is Ribosome-recycling factor, mitochondrial (RRF1).